A 155-amino-acid chain; its full sequence is Ribosomal RNA large subunit methyltransferase H (155 aa).

Residues leucine 72, glycine 103, and 122–127 (LSPLTL) contribute to the S-adenosyl-L-methionine site.

It belongs to the RNA methyltransferase RlmH family. Homodimer.

It localises to the cytoplasm. It catalyses the reaction pseudouridine(1915) in 23S rRNA + S-adenosyl-L-methionine = N(3)-methylpseudouridine(1915) in 23S rRNA + S-adenosyl-L-homocysteine + H(+). In terms of biological role, specifically methylates the pseudouridine at position 1915 (m3Psi1915) in 23S rRNA. This is Ribosomal RNA large subunit methyltransferase H from Haemophilus ducreyi (strain 35000HP / ATCC 700724).